A 1101-amino-acid polypeptide reads, in one-letter code: Protein diaphanous homolog 2 (1101 aa).

M1 carries the post-translational modification N-acetylmethionine. Positions 1–44 (MEQPGAAASGAGGGSEEPGGGRSNKRSAGNRAANEEETKNKPKL) are disordered. The span at 10-22 (GAGGGSEEPGGGR) shows a compositional bias: gly residues. A GBD/FH3 domain is found at 98–464 (SLNLSEKEVL…QIVLHCSGMD (367 aa)). 2 coiled-coil regions span residues 366-418 (KEKE…MLKD) and 487-547 (KAKV…SSSG). The segment covering 536–546 (RTQAQVLSSSS) has biased composition (polar residues). Disordered stretches follow at residues 536–594 (RTQA…PPPP), 1010–1048 (NKRR…DINK), and 1070–1101 (RDRR…ISSK). Pro residues predominate over residues 549–594 (PGPPAAPPLPGVGPPPPPPAPPLPGGAPLPPPPPPLPGMMGIPPPP). The 75-residue stretch at 549-623 (PGPPAAPPLP…PPPGISLNLP (75 aa)) folds into the FH1 domain. In terms of domain architecture, FH2 spans 628–1028 (QKKMYKPEVS…TRRAKLAKEK (401 aa)). A coiled-coil region spans residues 903–1053 (SASKVSAQIL…IDINKEGDET (151 aa)). Basic and acidic residues-rich tracts occupy residues 1010–1035 (NKRR…EKLE) and 1078–1090 (RNPD…LERS). Residues 1051–1081 (DETGVMDNLLEALQSGAAFRDRRKRIPRNPD) form the DAD domain.

The protein belongs to the formin homology family. Diaphanous subfamily. Isoform 3 interacts with RHOD in the GTP-bound form. Expressed in testis, ovary, small intestine, prostate, lung, liver, kidney and leukocytes.

The protein resides in the cytoplasm. It localises to the cytosol. Its subcellular location is the early endosome. Could be involved in oogenesis. Involved in the regulation of endosome dynamics. Implicated in a novel signal transduction pathway, in which isoform 3 and CSK are sequentially activated by RHOD to regulate the motility of early endosomes through interactions with the actin cytoskeleton. The sequence is that of Protein diaphanous homolog 2 (DIAPH2) from Homo sapiens (Human).